The sequence spans 367 residues: tRNA/tmRNA (uracil-C(5))-methyltransferase (367 aa).

Residues glutamine 190, tyrosine 218, asparagine 223, glutamate 239, and aspartate 299 each coordinate S-adenosyl-L-methionine. Cysteine 324 acts as the Nucleophile in catalysis. Residue glutamate 358 is the Proton acceptor of the active site.

This sequence belongs to the class I-like SAM-binding methyltransferase superfamily. RNA M5U methyltransferase family. TrmA subfamily.

The enzyme catalyses uridine(54) in tRNA + S-adenosyl-L-methionine = 5-methyluridine(54) in tRNA + S-adenosyl-L-homocysteine + H(+). It catalyses the reaction uridine(341) in tmRNA + S-adenosyl-L-methionine = 5-methyluridine(341) in tmRNA + S-adenosyl-L-homocysteine + H(+). Functionally, dual-specificity methyltransferase that catalyzes the formation of 5-methyluridine at position 54 (m5U54) in all tRNAs, and that of position 341 (m5U341) in tmRNA (transfer-mRNA). This Musicola paradisiaca (strain Ech703) (Dickeya paradisiaca) protein is tRNA/tmRNA (uracil-C(5))-methyltransferase.